The following is a 314-amino-acid chain: NAD-dependent protein lipoamidase sirtuin-4, mitochondrial (314 aa).

A mitochondrion-targeting transit peptide spans 1-28 (MKMSFALTFRSAKGRWIANPSQPCSKAS). The 278-residue stretch at 37 to 314 (PPLDPEKVKE…GELLPLIDPC (278 aa)) folds into the Deacetylase sirtuin-type domain. NAD(+) contacts are provided by residues 62-82 (GAGISTESGIPDYRSEKVGLY) and 143-146 (QNVD). Catalysis depends on histidine 161, which acts as the Proton acceptor. Residues cysteine 169, cysteine 172, cysteine 220, and cysteine 223 each contribute to the Zn(2+) site. Residues 260 to 262 (GSS), 286 to 288 (NIG), and cysteine 304 each bind NAD(+).

The protein belongs to the sirtuin family. Class II subfamily. As to quaternary structure, interacts with GLUD1, IDE and SLC25A5. Interacts with DLAT and PDHX. Interacts with MCCC1 (via the biotin carboxylation domain). Interacts with PCCA and PC. It depends on Zn(2+) as a cofactor. As to expression, detected in vascular smooth muscle and striated muscle. Detected in insulin-producing beta-cells in pancreas islets of Langerhans (at protein level). Widely expressed. Weakly expressed in leukocytes and fetal thymus.

It localises to the mitochondrion matrix. It carries out the reaction N(6)-[(R)-lipoyl]-L-lysyl-[protein] + NAD(+) + H2O = 2''-O-lipoyl-ADP-D-ribose + nicotinamide + L-lysyl-[protein]. It catalyses the reaction N(6)-biotinyl-L-lysyl-[protein] + NAD(+) + H2O = 2''-O-biotinyl-ADP-D-ribose + nicotinamide + L-lysyl-[protein]. The enzyme catalyses N(6)-acetyl-L-lysyl-[protein] + NAD(+) + H2O = 2''-O-acetyl-ADP-D-ribose + nicotinamide + L-lysyl-[protein]. The catalysed reaction is L-cysteinyl-[protein] + NAD(+) = S-(ADP-D-ribosyl)-L-cysteinyl-[protein] + nicotinamide + H(+). Its function is as follows. Acts as a NAD-dependent protein lipoamidase, biotinylase, deacetylase and ADP-ribosyl transferase. Catalyzes more efficiently removal of lipoyl- and biotinyl- than acetyl-lysine modifications. Inhibits the pyruvate dehydrogenase complex (PDH) activity via the enzymatic hydrolysis of the lipoamide cofactor from the E2 component, DLAT, in a phosphorylation-independent manner. Catalyzes the transfer of ADP-ribosyl groups onto target proteins, including mitochondrial GLUD1, inhibiting GLUD1 enzyme activity. Acts as a negative regulator of mitochondrial glutamine metabolism by mediating mono ADP-ribosylation of GLUD1: expressed in response to DNA damage and negatively regulates anaplerosis by inhibiting GLUD1, leading to block metabolism of glutamine into tricarboxylic acid cycle and promoting cell cycle arrest. In response to mTORC1 signal, SIRT4 expression is repressed, promoting anaplerosis and cell proliferation. Acts as a tumor suppressor. Also acts as a NAD-dependent protein deacetylase: mediates deacetylation of 'Lys-471' of MLYCD, inhibiting its activity, thereby acting as a regulator of lipid homeostasis. Does not seem to deacetylate PC. Controls fatty acid oxidation by inhibiting PPARA transcriptional activation. Impairs SIRT1-PPARA interaction probably through the regulation of NAD(+) levels. Down-regulates insulin secretion. The sequence is that of NAD-dependent protein lipoamidase sirtuin-4, mitochondrial from Homo sapiens (Human).